We begin with the raw amino-acid sequence, 317 residues long: Annexin A13 (317 aa).

The N-myristoyl glycine moiety is linked to residue Gly-2. 4 Annexin repeats span residues 15–86 (FDAD…ALLD), 87–158 (RPNE…SLLQ), 170–242 (ELAG…TIVR), and 246–317 (DLEG…ALLH).

This sequence belongs to the annexin family. In terms of assembly, monomer and homodimer. In terms of tissue distribution, detected on the tips of microvilli in small intestine (at protein level).

It is found in the apical cell membrane. The protein localises to the cell membrane. Its subcellular location is the cytoplasmic vesicle. Binds to membranes enriched in phosphatidylserine or phosphatidylglycerol in a calcium-dependent manner. Half-maximal membrane binding requires about 60 uM calcium. Does not bind to membranes that lack phospholipids with an acidic headgroup. In Mus musculus (Mouse), this protein is Annexin A13 (Anxa13).